A 210-amino-acid chain; its full sequence is uncharacterized protein (210 aa).

This is an uncharacterized protein from Escherichia coli (Bacteriophage T4).